The chain runs to 294 residues: Coiled-coil domain-containing protein 69 (294 aa).

The segment at 1–43 (MGCGHSRLSCCKPPKKRRQRPDQPPKPEPQELGPLNGDTATTD) is disordered. G2 carries the N-myristoyl glycine lipid modification. Positions 20–29 (RPDQPPKPEP) are enriched in basic and acidic residues. Positions 47–270 (ASEEAEQHQK…QEKEELLYRV (224 aa)) form a coiled coil. S152 and S239 each carry phosphoserine.

Belongs to the CCDC69 family.

It is found in the cytoplasm. Its subcellular location is the cytoskeleton. It localises to the spindle. The protein localises to the midbody. In terms of biological role, may act as a scaffold to regulate the recruitment and assembly of spindle midzone components. Required for the localization of AURKB and PLK1 to the spindle midzone. This chain is Coiled-coil domain-containing protein 69 (CCDC69), found in Bos taurus (Bovine).